The primary structure comprises 100 residues: Small ribosomal subunit protein uS14c (100 aa).

The protein belongs to the universal ribosomal protein uS14 family. In terms of assembly, part of the 30S ribosomal subunit.

The protein localises to the plastid. It is found in the chloroplast. In terms of biological role, binds 16S rRNA, required for the assembly of 30S particles. The polypeptide is Small ribosomal subunit protein uS14c (Chloranthus spicatus (Chulantree)).